A 2997-amino-acid polypeptide reads, in one-letter code: Chromodomain-helicase-DNA-binding protein 7 (2997 aa).

The interval 86 to 144 (PNRMMSNTPGNGLASPHSQYHTPPVPQVPHGGSGGGQMGVYPGMQNERHGQSFVDSSSM) is disordered. The span at 88-106 (RMMSNTPGNGLASPHSQYH) shows a compositional bias: polar residues. R148 is subject to Omega-N-methylarginine. 5 disordered regions span residues 160–186 (YQQQ…PQHM), 199–287 (SMQQ…AVRP), 375–419 (QMNT…GSAG), 498–816 (GQQH…KQKE), and 938–959 (REPE…SESS). The span at 166-177 (QPQPPQPAPSGP) shows a compositional bias: pro residues. Polar residues-rich tracts occupy residues 199 to 224 (SMQQ…NQGN) and 238 to 255 (VPQQ…SVQQ). R286 bears the Asymmetric dimethylarginine mark. The span at 375-390 (QMNTQTMHPSQPQGTY) shows a compositional bias: polar residues. A compositionally biased stretch (low complexity) spans 498-510 (GQQHPGQQPSFQQ). The span at 607-620 (VAEDPSKGFGKDDF) shows a compositional bias: basic and acidic residues. The segment covering 627–636 (QELNRNSLDG) has biased composition (polar residues). The residue at position 637 (S637) is a Phosphoserine. Composition is skewed to basic and acidic residues over residues 650–682 (KKDP…EPKE) and 717–729 (GKTE…DLDK). Position 725 is a phosphoserine (S725). Basic residues predominate over residues 746-758 (QKRRSSRQVKRKR). Over residues 759 to 769 (YTEDLEFKISD) the composition is skewed to basic and acidic residues. Over residues 782–794 (SPSNTSQSEQQES) the composition is skewed to polar residues. 2 Chromo domains span residues 800 to 867 (PVVE…GQNK) and 882 to 947 (VEVD…RVER). The Helicase ATP-binding domain occupies 980–1154 (LFNWYNMRNC…FSLLHFLEPS (175 aa)). 993-1000 (DEMGLGKT) serves as a coordination point for ATP. The short motif at 1105-1108 (DEAH) is the DEAH box element. In terms of domain architecture, Helicase C-terminal spans 1294–1464 (LIDKLLPKLK…LSKKEIEDLL (171 aa)). 2 disordered regions span residues 1576 to 1600 (FSDL…KSQG) and 1837 to 1863 (DMLA…TRTP). 2 positions are modified to phosphoserine: S1577 and S1581. Over residues 1584–1596 (EEKPCAKPRRPQD) the composition is skewed to basic and acidic residues. Acidic residues predominate over residues 1844-1855 (DGGEFDREDEDP). S1874 is subject to Phosphoserine. Composition is skewed to basic and acidic residues over residues 2170–2189 (QAEG…KCEG) and 2198–2207 (GSGKESKQEC). The interval 2170–2290 (QAEGKVEEPE…DETRDGFYME (121 aa)) is disordered. A phosphoserine mark is found at S2231, S2233, S2237, S2251, S2272, S2275, S2356, and S2395. A compositionally biased stretch (acidic residues) spans 2237–2251 (SEEDEEEKLEDDDKS). Residues 2401–2431 (RRRRRKIEIEAERAAKRRNLMEMVAQLRESQ) are a coiled coil. Phosphothreonine is present on T2472. A phosphoserine mark is found at S2533 and S2535. T2551 is modified (phosphothreonine). Phosphoserine is present on residues S2559 and S2619. Over residues 2823–2832 (ATGNTTTASS) the composition is skewed to low complexity. 2 disordered regions span residues 2823 to 2872 (ATGN…SANG) and 2935 to 2997 (EEKA…ENDE). Basic and acidic residues-rich tracts occupy residues 2839–2849 (STSKGEEKGNE) and 2935–2951 (EEKA…KDGE). A phosphoserine mark is found at S2956 and S2961. The span at 2970-2997 (LLEDEIAQGEELDSLDGGDEIENNENDE) shows a compositional bias: acidic residues.

Belongs to the SNF2/RAD54 helicase family. May interact with CTCF. Interacts with CHD8. Interacts with FAM124B. Found in a complex composed of AGO2, CHD7 and ARB2A. Interacts with TLK2. Widely expressed in fetal and adult tissues.

The protein localises to the nucleus. Its subcellular location is the nucleolus. The enzyme catalyses ATP + H2O = ADP + phosphate + H(+). Its function is as follows. ATP-dependent chromatin-remodeling factor, slides nucleosomes along DNA; nucleosome sliding requires ATP. Probable transcription regulator. May be involved in the in 45S precursor rRNA production. In Homo sapiens (Human), this protein is Chromodomain-helicase-DNA-binding protein 7 (CHD7).